A 347-amino-acid polypeptide reads, in one-letter code: UDP-3-O-acylglucosamine N-acyltransferase (347 aa).

His248 functions as the Proton acceptor in the catalytic mechanism.

It belongs to the transferase hexapeptide repeat family. LpxD subfamily. In terms of assembly, homotrimer.

The enzyme catalyses a UDP-3-O-[(3R)-3-hydroxyacyl]-alpha-D-glucosamine + a (3R)-hydroxyacyl-[ACP] = a UDP-2-N,3-O-bis[(3R)-3-hydroxyacyl]-alpha-D-glucosamine + holo-[ACP] + H(+). Its pathway is bacterial outer membrane biogenesis; LPS lipid A biosynthesis. Catalyzes the N-acylation of UDP-3-O-acylglucosamine using 3-hydroxyacyl-ACP as the acyl donor. Is involved in the biosynthesis of lipid A, a phosphorylated glycolipid that anchors the lipopolysaccharide to the outer membrane of the cell. This chain is UDP-3-O-acylglucosamine N-acyltransferase, found in Synechococcus sp. (strain CC9902).